Here is a 92-residue protein sequence, read N- to C-terminus: Transcription factor PRE1 (92 aa).

Residues 4-59 (RRSRQSSSAPRISDNQMIDLVSKLRQILPEIGQRRRSDKASASKVLQETCNYIRNL) enclose the bHLH domain.

As to quaternary structure, interacts with IBH1 and HFR1. As to expression, expressed in roots, leaves, stems and flowers.

It localises to the nucleus. Atypical and probable non DNA-binding bHLH transcription factor that integrates multiple signaling pathways to regulate cell elongation and plant development. Binds IBH1, forming a pair of antagonistic bHLH transcription factors that function downstream of BZR1 to mediate brassinosteroid regulation of cell elongation. Regulates light responses by binding and inhibiting the activity of the bHLH transcription factor HFR1, a critical regulator of light signaling and shade avoidance. May have a regulatory role in various aspects of gibberellin-dependent growth and development. The polypeptide is Transcription factor PRE1 (PRE1) (Arabidopsis thaliana (Mouse-ear cress)).